Consider the following 863-residue polypeptide: Receptor-like protein 9DC1 (863 aa).

The N-terminal stretch at 1–21 (MGCVKLVFFMLYVFLFQLVSS) is a signal peptide. Residues 22-812 (SSLPHLCPED…EEDSPMISWQ (791 aa)) are Extracellular-facing. The N-cap stretch occupies residues 24–90 (LPHLCPEDQA…GVHCDETTGQ (67 aa)). N-linked (GlcNAc...) asparagine glycans are attached at residues Asn-71 and Asn-108. The LRR 1; degenerate repeat unit spans residues 91-114 (VIALDLRCSQLQGKFHSNSSLFQL). LRR repeat units follow at residues 115–138 (SNLK…KFGE) and 140–163 (SDLT…ISHL). The LRR 4; degenerate repeat unit spans residues 164–190 (SKLHVLLIGDQYGLSIVPHNFEPLLKN). N-linked (GlcNAc...) asparagine glycosylation is found at Asn-190, Asn-203, and Asn-211. 6 LRR repeats span residues 191–213 (LTQL…SNFS), 214–237 (SHLT…VFHL), 240–262 (LEFL…KWNS), 264–286 (ASLM…SFSH), 287–311 (LTSL…LWNL), and 312–336 (TNIE…IFEK). N-linked (GlcNAc...) asparagine glycosylation is present at Asn-261. N-linked (GlcNAc...) asparagine glycosylation is found at Asn-299 and Asn-310. Residues 337–357 (LKKLSLFRNDNLDGGLEFLSF) form an LRR 11; degenerate repeat. 15 LRR repeats span residues 358–382 (NTQL…ISGL), 383–406 (QNLE…IFSL), 408–428 (SLVE…EFKS), 429–452 (KTLS…LLNQ), 454–476 (NLQL…ICNL), 477–500 (KTLI…VVER), 502–524 (EYLS…TFSV), 525–549 (GNIL…MINC), 551–572 (YLTL…WLGY), 573–597 (LFQL…GNTN), 599–623 (FMGL…ILGN), 667–690 (LDSN…IIGD), 691–714 (LVGL…SFQN), 715–739 (LSVL…LASL), and 741–759 (FLEV…IPKG). N-linked (GlcNAc...) asparagine glycans are attached at residues Asn-378, Asn-396, and Asn-416. Asn-464 carries N-linked (GlcNAc...) asparagine glycosylation. Asn-519 carries N-linked (GlcNAc...) asparagine glycosylation. Residue Asn-563 is glycosylated (N-linked (GlcNAc...) asparagine). N-linked (GlcNAc...) asparagine glycosylation is found at Asn-674, Asn-698, and Asn-714. 2 N-linked (GlcNAc...) asparagine glycosylation sites follow: Asn-746 and Asn-767. Residues 760–812 (KQFDSFGNTSYQGNDGLRGFPLSKLCGGEDQVTTPAELDQEEEEEDSPMISWQ) are C-cap/acidic domain. A helical membrane pass occupies residues 813 to 833 (GVLVGYGCGLVIGLSVIYIMW). The Cytoplasmic portion of the chain corresponds to 834–863 (STQYPAWFSRMDLKLEHIITTKMKKHKKRY).

The protein belongs to the RLP family.

Its subcellular location is the cell membrane. Functionally, involved in plant defense. Confers resistance to the fungal pathogen C.fulvum through recognition of the AVR9 elicitor protein. This is Receptor-like protein 9DC1 from Solanum pimpinellifolium (Currant tomato).